A 22-amino-acid polypeptide reads, in one-letter code: Motilin (22 aa).

The span at 1–11 (FVPFFTQSDIQ) shows a compositional bias: polar residues. The segment at 1–22 (FVPFFTQSDIQKMQEKERNKGQ) is disordered. Residues 12-22 (KMQEKERNKGQ) show a composition bias toward basic and acidic residues.

This sequence belongs to the motilin family.

Its subcellular location is the secreted. Its function is as follows. Plays an important role in the regulation of interdigestive gastrointestinal motility and indirectly causes rhythmic contraction of duodenal and colonic smooth muscle. The protein is Motilin (MLN) of Gallus gallus (Chicken).